We begin with the raw amino-acid sequence, 540 residues long: CTP synthase (540 aa).

The amidoligase domain stretch occupies residues 1–273; it reads MNNKDLKTKF…DDFILQHFKL (273 aa). Ser19 lines the CTP pocket. Ser19 contacts UTP. 20-25 lines the ATP pocket; it reads SLGKGI. Tyr60 lines the L-glutamine pocket. Asp77 is a binding site for ATP. Mg(2+)-binding residues include Asp77 and Glu147. Residues 154–156, 194–199, and Lys230 each bind CTP; these read DIE and KTKPTQ. Residues 194–199 and Lys230 each bind UTP; that span reads KTKPTQ. The 234-residue stretch at 306 to 539 folds into the Glutamine amidotransferase type-1 domain; it reads YIVLHDAYLS…VEASLLNQKN (234 aa). Position 361 (Gly361) interacts with L-glutamine. Cys388 (nucleophile; for glutamine hydrolysis) is an active-site residue. L-glutamine-binding positions include 389-392, Glu412, and Arg466; that span reads LGMQ. Residues His512 and Glu514 contribute to the active site.

It belongs to the CTP synthase family. Homotetramer.

It catalyses the reaction UTP + L-glutamine + ATP + H2O = CTP + L-glutamate + ADP + phosphate + 2 H(+). The enzyme catalyses L-glutamine + H2O = L-glutamate + NH4(+). It carries out the reaction UTP + NH4(+) + ATP = CTP + ADP + phosphate + 2 H(+). The protein operates within pyrimidine metabolism; CTP biosynthesis via de novo pathway; CTP from UDP: step 2/2. Allosterically activated by GTP, when glutamine is the substrate; GTP has no effect on the reaction when ammonia is the substrate. The allosteric effector GTP functions by stabilizing the protein conformation that binds the tetrahedral intermediate(s) formed during glutamine hydrolysis. Inhibited by the product CTP, via allosteric rather than competitive inhibition. Functionally, catalyzes the ATP-dependent amination of UTP to CTP with either L-glutamine or ammonia as the source of nitrogen. Regulates intracellular CTP levels through interactions with the four ribonucleotide triphosphates. The sequence is that of CTP synthase from Onion yellows phytoplasma (strain OY-M).